Consider the following 374-residue polypeptide: Protein Brevis radix-like 2 (374 aa).

2 disordered regions span residues 12–43 (NTNN…IKSL) and 57–80 (AYKS…ADSD). The span at 65-80 (SGSSNQNKNRSYADSD) shows a compositional bias: polar residues. The 56-residue stretch at 143–198 (KEWVAQVEPGVLITFVSLPEGGNDMKRIRFSREMFDKWQAQKWWAENFDKVMELYN) folds into the BRX 1 domain. The segment at 205–316 (QSVPLPTPPR…EELSVSNASD (112 aa)) is disordered. Polar residues-rich tracts occupy residues 246 to 259 (SSGS…TQTQ) and 267 to 288 (GLAT…SSVD). Basic and acidic residues predominate over residues 289–307 (ESARSSFSREEEEADHSGE). The BRX 2 domain occupies 319 to 374 (TEWVEQDEAGVYITIRALPDGTRELRRVRFSREKFGETNARLWWEQNRARIQQQYL).

It belongs to the BRX family. As to expression, expressed in roots.

The protein resides in the nucleus. This chain is Protein Brevis radix-like 2 (BRXL2), found in Arabidopsis thaliana (Mouse-ear cress).